The primary structure comprises 861 residues: Interleukin-12 receptor subunit beta-2 (861 aa).

Residues 1–23 (MARTVCGCSWALIFIIMSLLVKA) form the signal peptide. Residues 24–622 (KIDVCKRGDV…REFCLQGKAN (599 aa)) are Extracellular-facing. N-linked (GlcNAc...) asparagine glycosylation is found at asparagine 48, asparagine 129, asparagine 166, and asparagine 271. 5 consecutive Fibronectin type-III domains span residues 126–224 (QPQN…VVRP), 226–317 (PPWD…TQTP), 318–415 (EKEP…NIAD), 423–520 (APQQ…KHKA), and 521–620 (PLSG…LQGK). The WSXWS motif motif lies at 305–309 (WSDWS). N-linked (GlcNAc...) asparagine glycans are attached at residues asparagine 347, asparagine 376, and asparagine 480. Residues 623–643 (WSTFVAPSICIAVITVGVFSM) traverse the membrane as a helical segment. The Cytoplasmic segment spans residues 644–861 (RCFRQKVFVL…LKMGCGSLML (218 aa)). A Box 1 motif motif is present at residues 662 to 670 (CSREIPDPA). The disordered stretch occupies residues 718–761 (FRRPHHPNWPGKGQRLQGRHASEEDTGSSASSPPPPRALTAETG). A Phosphotyrosine modification is found at tyrosine 800.

It belongs to the type I cytokine receptor family. Type 2 subfamily. As to quaternary structure, heterodimer/heterooligomer; disulfide-linked. The functional high affinity IL12 receptor is composed of I12RB1 and IL12RB2. Il12RB2 binds JAK2 (via its N-terminal) through a membrane-proximal region of the cytoplasmic domain. On IL12 stimulation, phosphorylated on C-terminal tyrosine residues.

The protein resides in the membrane. Receptor for interleukin-12. This subunit is the signaling component coupling to the JAK2/STAT4 pathway. This chain is Interleukin-12 receptor subunit beta-2 (IL12RB2), found in Sus scrofa (Pig).